A 388-amino-acid chain; its full sequence is Cystathionine gamma-synthase (388 aa).

The disordered stretch occupies residues 1–24; it reads MSEDRTGHQGISGPATRAIHAGYR. The residue at position 208 (lysine 208) is an N6-(pyridoxal phosphate)lysine.

Belongs to the trans-sulfuration enzymes family. In terms of assembly, homotetramer. Pyridoxal 5'-phosphate is required as a cofactor.

Its subcellular location is the cytoplasm. It carries out the reaction O-succinyl-L-homoserine + L-cysteine = L,L-cystathionine + succinate + H(+). Functionally, catalyzes the formation of L-cystathionine from O-succinyl-L-homoserine (OSHS) and L-cysteine, via a gamma-replacement reaction. In the absence of thiol, catalyzes gamma-elimination to form 2-oxobutanoate, succinate and ammonia. The polypeptide is Cystathionine gamma-synthase (metB) (Mycobacterium bovis (strain ATCC BAA-935 / AF2122/97)).